A 100-amino-acid chain; its full sequence is Aspartyl/glutamyl-tRNA(Asn/Gln) amidotransferase subunit C (100 aa).

The protein belongs to the GatC family. In terms of assembly, heterotrimer of A, B and C subunits.

It catalyses the reaction L-glutamyl-tRNA(Gln) + L-glutamine + ATP + H2O = L-glutaminyl-tRNA(Gln) + L-glutamate + ADP + phosphate + H(+). It carries out the reaction L-aspartyl-tRNA(Asn) + L-glutamine + ATP + H2O = L-asparaginyl-tRNA(Asn) + L-glutamate + ADP + phosphate + 2 H(+). Its function is as follows. Allows the formation of correctly charged Asn-tRNA(Asn) or Gln-tRNA(Gln) through the transamidation of misacylated Asp-tRNA(Asn) or Glu-tRNA(Gln) in organisms which lack either or both of asparaginyl-tRNA or glutaminyl-tRNA synthetases. The reaction takes place in the presence of glutamine and ATP through an activated phospho-Asp-tRNA(Asn) or phospho-Glu-tRNA(Gln). In Streptococcus pneumoniae (strain P1031), this protein is Aspartyl/glutamyl-tRNA(Asn/Gln) amidotransferase subunit C.